A 436-amino-acid polypeptide reads, in one-letter code: UPF0597 protein YhaM (436 aa).

This sequence belongs to the UPF0597 family.

The sequence is that of UPF0597 protein YhaM from Escherichia coli (strain SE11).